The following is a 378-amino-acid chain: Ribosomal RNA large subunit methyltransferase G (378 aa).

It belongs to the methyltransferase superfamily. RlmG family.

It is found in the cytoplasm. The enzyme catalyses guanosine(1835) in 23S rRNA + S-adenosyl-L-methionine = N(2)-methylguanosine(1835) in 23S rRNA + S-adenosyl-L-homocysteine + H(+). Specifically methylates the guanine in position 1835 (m2G1835) of 23S rRNA. This Salmonella newport (strain SL254) protein is Ribosomal RNA large subunit methyltransferase G.